The primary structure comprises 717 residues: Adhesion cell surface protein MAD1 (717 aa).

The signal sequence occupies residues 1–19 (MKSALSVVVAAAGVQQASA). Composition is skewed to low complexity over residues 237–254 (TPVTTLQTYTTPSQQTTT) and 262–274 (SKETTTSAQQTTP). Disordered regions lie at residues 237–392 (TPVT…ATTT) and 451–506 (RTQS…TPPC). A run of 8 repeats spans residues 275–286 (GKETTPAQQTTP), 287–298 (SKETTPVQQTTS), 299–310 (GKETTPAQQTTP), 311–328 (GKETTSSQETTSAHQTTP), 329–340 (GKETTPAQQTTP), 341–352 (GKETTPAQQTTP), 353–364 (GKETTPAQQTTP), and 365–376 (GKETTPAQQTTP). The span at 275–366 (GKETTPAQQT…TPAQQTTPGK (92 aa)) shows a compositional bias: polar residues. Composition is skewed to low complexity over residues 368-392 (TTPAQQTTPGQQTTPSQPTTAATTT) and 484-503 (QPTGEKPNPVTSQPPQSTQT). The 115-residue stretch at 481–595 (TPEQPTGEKP…TQIITVTGTP (115 aa)) folds into the CFEM domain. 3 disulfide bridges follow: C513/C546, C524/C532, and C534/C568. D529 lines the heme pocket. N-linked (GlcNAc...) asparagine glycosylation is present at N614. Residues 632–690 (PTPTGGVPNQPPATASVPAGQNPPPVTGQNPPPAVTDQSPPPAITTGTGGVIPPKPTGS) form a disordered region. A compositionally biased stretch (pro residues) spans 652–674 (QNPPPVTGQNPPPAVTDQSPPPA). A lipid anchor (GPI-anchor amidated alanine) is attached at A695. Residues 696 to 717 (GSGRVGAGLGMVLAVAAFVAAL) constitute a propeptide, removed in mature form.

Belongs to the RBT5 family. In terms of processing, the GPI-anchor is attached to the protein in the endoplasmic reticulum and serves to target the protein to the cell surface. There, the glucosamine-inositol phospholipid moiety is cleaved off and the GPI-modified mannoprotein is covalently attached via its lipidless GPI glycan remnant to the 1,6-beta-glucan of the outer cell wall layer.

It is found in the secreted. The protein resides in the cell wall. The protein localises to the cell membrane. In terms of biological role, cell surface adhesion protein that plays a key role in virulence by allowing adherence to the insect host surface. Required to orientate the cytoskeleton and stimulate the expression of genes involved in the cell cycle. Is also involved in achieving the septin hourglass shape and subsequent separation of cells. This chain is Adhesion cell surface protein MAD1, found in Metarhizium anisopliae (Entomophthora anisopliae).